The sequence spans 335 residues: GTPase Obg (335 aa).

The 158-residue stretch at 1-158 (MFVDQITLEL…RLVELELKLI (158 aa)) folds into the Obg domain. An OBG-type G domain is found at 159–334 (ADIGLVGFPN…LYDLFKSKLS (176 aa)). GTP-binding positions include 165 to 172 (GFPNAGKS), 190 to 194 (FTTLH), 215 to 218 (DIPG), 285 to 288 (NKID), and 315 to 317 (SGL). 2 residues coordinate Mg(2+): Ser-172 and Thr-192.

The protein belongs to the TRAFAC class OBG-HflX-like GTPase superfamily. OBG GTPase family. Monomer. Mg(2+) serves as cofactor.

Its subcellular location is the cytoplasm. Functionally, an essential GTPase which binds GTP, GDP and possibly (p)ppGpp with moderate affinity, with high nucleotide exchange rates and a fairly low GTP hydrolysis rate. Plays a role in control of the cell cycle, stress response, ribosome biogenesis and in those bacteria that undergo differentiation, in morphogenesis control. The chain is GTPase Obg from Chlamydia trachomatis serovar A (strain ATCC VR-571B / DSM 19440 / HAR-13).